Consider the following 130-residue polypeptide: Protein Wnt-9 (130 aa).

A lipid anchor (O-palmitoleoyl serine; by PORCN) is attached at S1. Residues 41–69 are disordered; the sequence is AGERTIARSRRRPREQRGQRRPKVSDGAL. Positions 47–62 are enriched in basic residues; the sequence is ARSRRRPREQRGQRRP. An N-linked (GlcNAc...) asparagine glycan is attached at N97. The cysteines at positions 100 and 111 are disulfide-linked.

It belongs to the Wnt family. Palmitoleoylation is required for efficient binding to frizzled receptors. Depalmitoleoylation leads to Wnt signaling pathway inhibition.

It localises to the secreted. The protein localises to the extracellular space. Its subcellular location is the extracellular matrix. Its function is as follows. Ligand for members of the frizzled family of seven transmembrane receptors. Probable developmental protein. May be a signaling molecule which affects the development of discrete regions of tissues. Is likely to signal over only few cell diameters. This chain is Protein Wnt-9 (WNT-9), found in Eptatretus stoutii (Pacific hagfish).